We begin with the raw amino-acid sequence, 245 residues long: NAD(P)H-quinone oxidoreductase subunit K (245 aa).

Residues Cys-58, Cys-59, Cys-123, and Cys-154 each coordinate [4Fe-4S] cluster.

This sequence belongs to the complex I 20 kDa subunit family. In terms of assembly, NDH-1 can be composed of about 15 different subunits; different subcomplexes with different compositions have been identified which probably have different functions. [4Fe-4S] cluster is required as a cofactor.

It localises to the cellular thylakoid membrane. The enzyme catalyses a plastoquinone + NADH + (n+1) H(+)(in) = a plastoquinol + NAD(+) + n H(+)(out). The catalysed reaction is a plastoquinone + NADPH + (n+1) H(+)(in) = a plastoquinol + NADP(+) + n H(+)(out). Its function is as follows. NDH-1 shuttles electrons from an unknown electron donor, via FMN and iron-sulfur (Fe-S) centers, to quinones in the respiratory and/or the photosynthetic chain. The immediate electron acceptor for the enzyme in this species is believed to be plastoquinone. Couples the redox reaction to proton translocation, and thus conserves the redox energy in a proton gradient. Cyanobacterial NDH-1 also plays a role in inorganic carbon-concentration. This is NAD(P)H-quinone oxidoreductase subunit K from Trichormus variabilis (strain ATCC 29413 / PCC 7937) (Anabaena variabilis).